Here is a 271-residue protein sequence, read N- to C-terminus: Aminodeoxychorismate lyase (271 aa).

Lysine 140 is modified (N6-(pyridoxal phosphate)lysine).

Belongs to the class-IV pyridoxal-phosphate-dependent aminotransferase family. In terms of assembly, homodimer. Pyridoxal 5'-phosphate serves as cofactor.

It carries out the reaction 4-amino-4-deoxychorismate = 4-aminobenzoate + pyruvate + H(+). It participates in cofactor biosynthesis; tetrahydrofolate biosynthesis; 4-aminobenzoate from chorismate: step 2/2. Functionally, involved in the biosynthesis of p-aminobenzoate (PABA), a precursor of tetrahydrofolate. Converts 4-amino-4-deoxychorismate into 4-aminobenzoate (PABA) and pyruvate. This Vibrio harveyi (Beneckea harveyi) protein is Aminodeoxychorismate lyase (pabC).